The chain runs to 220 residues: Probable glutathione S-transferase parA (220 aa).

Positions 4–83 (NNVVLLDFWP…YIDEVWHDKC (80 aa)) constitute a GST N-terminal domain. Glutathione contacts are provided by residues serine 14, lysine 41, isoleucine 55, and 67-68 (ES). The region spanning 89–209 (DPYERSQARF…LPHPHKIYGF (121 aa)) is the GST C-terminal domain.

It belongs to the GST superfamily. HSP26 family.

It catalyses the reaction RX + glutathione = an S-substituted glutathione + a halide anion + H(+). The chain is Probable glutathione S-transferase parA (PARA) from Nicotiana tabacum (Common tobacco).